Here is an 88-residue protein sequence, read N- to C-terminus: Apolipoprotein C-I (88 aa).

The signal sequence occupies residues 1 to 26; it reads MRLFLSLPVLVVVLAMVWEGPAPTQA.

It belongs to the apolipoprotein C1 family.

The protein localises to the secreted. Functionally, inhibitor of lipoprotein binding to the low density lipoprotein (LDL) receptor, LDL receptor-related protein, and very low density lipoprotein (VLDL) receptor. Associates with high density lipoproteins (HDL) and the triacylglycerol-rich lipoproteins in the plasma and makes up about 10% of the protein of the VLDL and 2% of that of HDL. Appears to interfere directly with fatty acid uptake and is also the major plasma inhibitor of cholesteryl ester transfer protein (CETP). Binds free fatty acids and reduces their intracellular esterification. Modulates the interaction of APOE with beta-migrating VLDL and inhibits binding of beta-VLDL to the LDL receptor-related protein. The polypeptide is Apolipoprotein C-I (APOC1) (Neomonachus schauinslandi (Hawaiian monk seal)).